The following is a 171-amino-acid chain: NADH-quinone oxidoreductase subunit I 1 (171 aa).

4Fe-4S ferredoxin-type domains follow at residues 39-71 (IVLT…LSKA) and 81-110 (EHFR…LTPD). Cys51, Cys54, Cys57, Cys61, Cys90, Cys93, Cys96, and Cys100 together coordinate [4Fe-4S] cluster.

The protein belongs to the complex I 23 kDa subunit family. As to quaternary structure, NDH-1 is composed of 14 different subunits. Subunits NuoA, H, J, K, L, M, N constitute the membrane sector of the complex. It depends on [4Fe-4S] cluster as a cofactor.

Its subcellular location is the cell inner membrane. The catalysed reaction is a quinone + NADH + 5 H(+)(in) = a quinol + NAD(+) + 4 H(+)(out). Functionally, NDH-1 shuttles electrons from NADH, via FMN and iron-sulfur (Fe-S) centers, to quinones in the respiratory chain. The immediate electron acceptor for the enzyme in this species is believed to be ubiquinone. Couples the redox reaction to proton translocation (for every two electrons transferred, four hydrogen ions are translocated across the cytoplasmic membrane), and thus conserves the redox energy in a proton gradient. The sequence is that of NADH-quinone oxidoreductase subunit I 1 from Rhodopseudomonas palustris (strain HaA2).